The primary structure comprises 132 residues: Protein KRTCAP2 homolog (132 aa).

4 consecutive transmembrane segments (helical) span residues 1–21 (MAVP…LIFS), 35–55 (MATV…LTAV), 69–89 (AKLF…CGMV), and 92–109 (VCAT…YYIN).

The protein belongs to the KRTCAP2 family. As to quaternary structure, component of the oligosaccharyltransferase (OST) complex.

The protein localises to the membrane. Subunit of the oligosaccharyl transferase (OST) complex that catalyzes the initial transfer of a defined glycan (Glc(3)Man(9)GlcNAc(2) in eukaryotes) from the lipid carrier dolichol-pyrophosphate to an asparagine residue within an Asn-X-Ser/Thr consensus motif in nascent polypeptide chains, the first step in protein N-glycosylation. N-glycosylation occurs cotranslationally and the complex associates with the Sec61 complex at the channel-forming translocon complex that mediates protein translocation across the endoplasmic reticulum (ER). All subunits are required for a maximal enzyme activity. This Aedes aegypti (Yellowfever mosquito) protein is Protein KRTCAP2 homolog.